The sequence spans 155 residues: Small ribosomal subunit protein uS9 (155 aa).

It belongs to the universal ribosomal protein uS9 family.

This is Small ribosomal subunit protein uS9 from Rhizobium leguminosarum bv. trifolii (strain WSM2304).